The chain runs to 124 residues: Small ribosomal subunit protein uS13 (124 aa).

The disordered stretch occupies residues 95 to 124; that stretch reads GLPVRGQRTKTNARTRKGPKRTIAGKKKAK.

It belongs to the universal ribosomal protein uS13 family. As to quaternary structure, part of the 30S ribosomal subunit. Forms a loose heterodimer with protein S19. Forms two bridges to the 50S subunit in the 70S ribosome.

Located at the top of the head of the 30S subunit, it contacts several helices of the 16S rRNA. In the 70S ribosome it contacts the 23S rRNA (bridge B1a) and protein L5 of the 50S subunit (bridge B1b), connecting the 2 subunits; these bridges are implicated in subunit movement. Contacts the tRNAs in the A and P-sites. The chain is Small ribosomal subunit protein uS13 from Rhodococcus jostii (strain RHA1).